The primary structure comprises 1563 residues: Integrator complex subunit 5-like protein (1563 aa).

2 stretches are compositionally biased toward basic and acidic residues: residues 1–21 (MKEEETIEISEKEKDKERNDN) and 31–44 (EDWRNEETATKNEN). Disordered stretches follow at residues 1–63 (MKEE…YDDD), 102–208 (KKSK…NITY), and 270–310 (NSLN…QQNP). A compositionally biased stretch (acidic residues) spans 52-63 (GDSDDDDYYDDD). Composition is skewed to low complexity over residues 109 to 133 (TAATTTTTTTTTTTTTTTTTPTATA) and 141 to 202 (NNLL…NNNN). The chain crosses the membrane as a helical span at residues 350–370 (DSIINWSLSTLTIITRLLIIL). Residues 381–398 (QQQQQQQQQQQQQQQQQQ) are compositionally biased toward low complexity. Disordered regions lie at residues 381-417 (QQQQQQQQQQQQQQQQQQTKNKTQFPPPPPPPLRQPI), 466-498 (SKSSSSSSSSSSSSSSSSSSSSSSSSSSSSSKT), 637-694 (FDNN…DNSS), and 784-828 (ILNN…SQEI). The span at 405–414 (FPPPPPPPLR) shows a compositional bias: pro residues. Low complexity-rich tracts occupy residues 468 to 496 (SSSSSSSSSSSSSSSSSSSSSSSSSSSSS), 639 to 686 (NNNN…NNNN), and 786 to 824 (NNNNNNNNNNNNNNNNNNNNNNNNNNNNNNNNNQQQQQQ). Residues 877-897 (IIIKLISLIGMDSIYSSLIIL) form a helical membrane-spanning segment. Disordered regions lie at residues 1154 to 1173 (SGNFGNGDDDDDEYGDDEYG) and 1268 to 1303 (KQRMKKKKQSIQQNGNINNEQQQEEDDNDDADDQNE). The segment covering 1160-1172 (GDDDDDEYGDDEY) has biased composition (acidic residues). Over residues 1277–1288 (SIQQNGNINNEQ) the composition is skewed to low complexity. Residues 1289 to 1303 (QQEEDDNDDADDQNE) are compositionally biased toward acidic residues.

It belongs to the Integrator subunit 5 family. In terms of assembly, component of the Integrator complex. The core complex associates with protein phosphatase 2A subunits, to form the Integrator-PP2A (INTAC) complex.

It is found in the nucleus. It localises to the cytoplasm. The protein resides in the nucleus membrane. Its function is as follows. Component of the integrator complex, a multiprotein complex that terminates RNA polymerase II (Pol II) transcription in the promoter-proximal region of genes. The integrator complex provides a quality checkpoint during transcription elongation by driving premature transcription termination of transcripts that are unfavorably configured for transcriptional elongation: the complex terminates transcription by (1) catalyzing dephosphorylation of the C-terminal domain (CTD) of Pol II subunit polr2a, (2) degrading the exiting nascent RNA transcript via endonuclease activity and (3) promoting the release of Pol II from bound DNA. The integrator complex is also involved in terminating the synthesis of non-coding Pol II transcripts, such as enhancer RNAs (eRNAs), small nuclear RNAs (snRNAs), telomerase RNAs and long non-coding RNAs (lncRNAs). In Dictyostelium discoideum (Social amoeba), this protein is Integrator complex subunit 5-like protein.